A 1374-amino-acid chain; its full sequence is DNA-directed RNA polymerase subunit beta (1374 aa).

The protein belongs to the RNA polymerase beta chain family. In terms of assembly, the RNAP catalytic core consists of 2 alpha, 1 beta, 1 beta' and 1 omega subunit. When a sigma factor is associated with the core the holoenzyme is formed, which can initiate transcription.

It carries out the reaction RNA(n) + a ribonucleoside 5'-triphosphate = RNA(n+1) + diphosphate. DNA-dependent RNA polymerase catalyzes the transcription of DNA into RNA using the four ribonucleoside triphosphates as substrates. This chain is DNA-directed RNA polymerase subunit beta, found in Rhodopseudomonas palustris (strain BisB5).